A 218-amino-acid chain; its full sequence is Thiopurine S-methyltransferase (218 aa).

S-adenosyl-L-methionine contacts are provided by tryptophan 10, leucine 45, glutamate 66, and arginine 123.

It belongs to the class I-like SAM-binding methyltransferase superfamily. TPMT family.

It localises to the cytoplasm. It catalyses the reaction S-adenosyl-L-methionine + a thiopurine = S-adenosyl-L-homocysteine + a thiopurine S-methylether.. The polypeptide is Thiopurine S-methyltransferase (Pseudomonas aeruginosa (strain ATCC 15692 / DSM 22644 / CIP 104116 / JCM 14847 / LMG 12228 / 1C / PRS 101 / PAO1)).